Consider the following 290-residue polypeptide: MRIADYSVTKAILDRYGFTFKKSFGQNFLTDTNILQKIVDTAEIDKSVNVIEIGPGIGALTEFLAERAAEVMAFEIDERLVPILADTLRDFDNVQVVNQDILKADLQTQLKQFSNPDLPIKVVANLPYYITTPILMHLIESKIPFQEFVVMMQREVADRISAEPNTKAYGSLSIAVQYYMTAKIAFVVPRTVFVPAPNVDSAILKMTRRDQPLIEVQDEDFFFRVSRVGFVHRRKTLWNNLVSHFGKAEDTKARLEQGLALAGIKPSIRGEALSIQDFGRLADALKQVGL.

6 residues coordinate S-adenosyl-L-methionine: Asn27, Leu29, Gly54, Glu75, Asp100, and Asn125.

The protein belongs to the class I-like SAM-binding methyltransferase superfamily. rRNA adenine N(6)-methyltransferase family. RsmA subfamily.

It localises to the cytoplasm. The catalysed reaction is adenosine(1518)/adenosine(1519) in 16S rRNA + 4 S-adenosyl-L-methionine = N(6)-dimethyladenosine(1518)/N(6)-dimethyladenosine(1519) in 16S rRNA + 4 S-adenosyl-L-homocysteine + 4 H(+). Its function is as follows. Specifically dimethylates two adjacent adenosines (A1518 and A1519) in the loop of a conserved hairpin near the 3'-end of 16S rRNA in the 30S particle. May play a critical role in biogenesis of 30S subunits. This chain is Ribosomal RNA small subunit methyltransferase A, found in Streptococcus equi subsp. zooepidemicus (strain H70).